The sequence spans 158 residues: 6,7-dimethyl-8-ribityllumazine synthase (158 aa).

5-amino-6-(D-ribitylamino)uracil is bound by residues F24, 58-60 (AFE), and 82-84 (AVI). 87–88 (GT) provides a ligand contact to (2S)-2-hydroxy-3-oxobutyl phosphate. Catalysis depends on H90, which acts as the Proton donor. Residue F115 participates in 5-amino-6-(D-ribitylamino)uracil binding. Position 129 (R129) interacts with (2S)-2-hydroxy-3-oxobutyl phosphate.

The protein belongs to the DMRL synthase family. In terms of assembly, forms an icosahedral capsid composed of 60 subunits, arranged as a dodecamer of pentamers.

It catalyses the reaction (2S)-2-hydroxy-3-oxobutyl phosphate + 5-amino-6-(D-ribitylamino)uracil = 6,7-dimethyl-8-(1-D-ribityl)lumazine + phosphate + 2 H2O + H(+). It participates in cofactor biosynthesis; riboflavin biosynthesis; riboflavin from 2-hydroxy-3-oxobutyl phosphate and 5-amino-6-(D-ribitylamino)uracil: step 1/2. In terms of biological role, catalyzes the formation of 6,7-dimethyl-8-ribityllumazine by condensation of 5-amino-6-(D-ribitylamino)uracil with 3,4-dihydroxy-2-butanone 4-phosphate. This is the penultimate step in the biosynthesis of riboflavin. The polypeptide is 6,7-dimethyl-8-ribityllumazine synthase (Stutzerimonas stutzeri (strain A1501) (Pseudomonas stutzeri)).